A 229-amino-acid polypeptide reads, in one-letter code: Prolactin (229 aa).

The N-terminal stretch at 1–30 is a signal peptide; the sequence is MSNRGASLKGLFLAVLLVSNTLLTKEGVTS. 3 cysteine pairs are disulfide-bonded: C34–C41, C88–C204, and C221–C229.

The protein belongs to the somatotropin/prolactin family.

The protein resides in the secreted. The polypeptide is Prolactin (PRL) (Gallus gallus (Chicken)).